The chain runs to 341 residues: Large ribosomal subunit protein uL10 (341 aa).

The segment at 301–341 is disordered; it reads EAAPAAAPAAEEKAEEEKKEEEEEKKEDQELSGLDSIFGGF.

Belongs to the universal ribosomal protein uL10 family. As to quaternary structure, part of the 50S ribosomal subunit. Forms part of the ribosomal stalk which helps the ribosome interact with GTP-bound translation factors. Forms a heptameric L10(L12)2(L12)2(L12)2 complex, where L10 forms an elongated spine to which the L12 dimers bind in a sequential fashion.

Forms part of the ribosomal stalk, playing a central role in the interaction of the ribosome with GTP-bound translation factors. This is Large ribosomal subunit protein uL10 from Aeropyrum pernix (strain ATCC 700893 / DSM 11879 / JCM 9820 / NBRC 100138 / K1).